Reading from the N-terminus, the 798-residue chain is Cold shock domain-containing protein E1 (798 aa).

Met-1 is subject to N-acetylmethionine. In terms of domain architecture, CSD 1 spans 26-87 (ETGVIEKLLT…RTGKPIAVKL (62 aa)). An N6-acetyllysine modification is found at Lys-81. Residue Lys-91 forms a Glycyl lysine isopeptide (Lys-Gly) (interchain with G-Cter in SUMO2) linkage. Residue Ser-123 is modified to Phosphoserine. In terms of domain architecture, CSD 2; truncated spans 136–179 (VFYLTYTPEDVEGNVQLETGDKINFVIDNNKHTGAVSARNIMLL). One can recognise a CSD 3 domain in the interval 186–245 (CQGVVCAMKEAFGFIERGDVVKEIFFHYSEFKGDLETLQPGDDVEFTIKDRNGKEVATDV). Ser-276 is modified (phosphoserine). Residues 297-337 (LPFGDKDTKSKVTLLEGDHVRFNISTDRRDKLERATNIEVL) form the CSD 4; truncated domain. CSD domains lie at 349–410 (EMGV…AIRI) and 447–507 (NKGK…ATCV). Ser-514 bears the Phosphoserine mark. A CSD 7 domain is found at 519 to 579 (LLGYVATLKD…KGNKVSAEKV (61 aa)). Position 584 is a phosphoserine (Ser-584). CSD domains lie at 610–670 (PTQT…AYNI) and 674–735 (RRAT…ACNV). The SUZ-C domain maps to 748–789 (PRPDRLVNRLKNITLDDASAPRLMVLRQPRGPDNSMGFGAER). Residue Thr-761 is modified to Phosphothreonine.

Belongs to the UNR family. Component of a multi subunit autoregulatory ribonucleoprotein complex (ARC), at least composed of IGF2BP1, PABPC1 and CSDE1. Interacts with STRAP. Part of a complex associated with the FOS mCRD domain and consisting of PABPC1, PAIP1, HNRPD and SYNCRIP. The interaction with PABPC1 is direct and RNA-independent. Interacts with EIF4ENIF1/4E-T.

The protein localises to the cytoplasm. Its subcellular location is the stress granule. The protein resides in the P-body. RNA-binding protein involved in translationally coupled mRNA turnover. Implicated with other RNA-binding proteins in the cytoplasmic deadenylation/translational and decay interplay of the FOS mRNA mediated by the major coding-region determinant of instability (mCRD) domain. Required for efficient formation of stress granules. Functionally, (Microbial infection) Required for internal initiation of translation of human rhinovirus RNA. This is Cold shock domain-containing protein E1 from Homo sapiens (Human).